We begin with the raw amino-acid sequence, 225 residues long: NAD(P)H-quinone oxidoreductase subunit K, chloroplastic (225 aa).

[4Fe-4S] cluster contacts are provided by C43, C44, C108, and C139.

Belongs to the complex I 20 kDa subunit family. In terms of assembly, NDH is composed of at least 16 different subunits, 5 of which are encoded in the nucleus. The cofactor is [4Fe-4S] cluster.

It localises to the plastid. The protein localises to the chloroplast thylakoid membrane. It carries out the reaction a plastoquinone + NADH + (n+1) H(+)(in) = a plastoquinol + NAD(+) + n H(+)(out). The catalysed reaction is a plastoquinone + NADPH + (n+1) H(+)(in) = a plastoquinol + NADP(+) + n H(+)(out). Functionally, NDH shuttles electrons from NAD(P)H:plastoquinone, via FMN and iron-sulfur (Fe-S) centers, to quinones in the photosynthetic chain and possibly in a chloroplast respiratory chain. The immediate electron acceptor for the enzyme in this species is believed to be plastoquinone. Couples the redox reaction to proton translocation, and thus conserves the redox energy in a proton gradient. This chain is NAD(P)H-quinone oxidoreductase subunit K, chloroplastic, found in Lepidium virginicum (Virginia pepperweed).